Reading from the N-terminus, the 185-residue chain is Ribosome-recycling factor (185 aa).

It belongs to the RRF family.

The protein resides in the cytoplasm. Responsible for the release of ribosomes from messenger RNA at the termination of protein biosynthesis. May increase the efficiency of translation by recycling ribosomes from one round of translation to another. The protein is Ribosome-recycling factor of Rhodospirillum centenum (strain ATCC 51521 / SW).